The chain runs to 295 residues: Protease HtpX (295 aa).

2 helical membrane passes run 4-24 and 42-62; these read ILLF…TLSL and QLLI…LFIS. His-147 contributes to the Zn(2+) binding site. Residue Glu-148 is part of the active site. His-151 provides a ligand contact to Zn(2+). The next 2 membrane-spanning stretches (helical) occupy residues 158 to 178 and 199 to 219; these read VTLA…ARII and VATI…VMWF. Glu-224 serves as a coordination point for Zn(2+).

The protein belongs to the peptidase M48B family. Zn(2+) is required as a cofactor.

It is found in the cell inner membrane. The sequence is that of Protease HtpX from Pseudomonas fluorescens (strain ATCC BAA-477 / NRRL B-23932 / Pf-5).